A 559-amino-acid polypeptide reads, in one-letter code: Arginine--tRNA ligase (559 aa).

The 'HIGH' region motif lies at 116–126 (ANPNGPLHVGH).

Belongs to the class-I aminoacyl-tRNA synthetase family.

It localises to the cytoplasm. The enzyme catalyses tRNA(Arg) + L-arginine + ATP = L-arginyl-tRNA(Arg) + AMP + diphosphate. The chain is Arginine--tRNA ligase from Methanosphaerula palustris (strain ATCC BAA-1556 / DSM 19958 / E1-9c).